Reading from the N-terminus, the 536-residue chain is Caspase recruitment domain-containing protein 9 (536 aa).

Serine 2 is modified (phosphoserine). Aspartate 3, cysteine 10, and histidine 73 together coordinate Zn(2+). The CARD domain occupies 6–98 (NDDECWSTLE…QLYRKVTGKE (93 aa)). Residues 99–116 (PARVFSMIIDASGESGLT) form a linker region. The stretch at 117-272 (QLLMTEVMKL…ELQVSVQEGK (156 aa)) forms a coiled coil. Lysine 125 is covalently cross-linked (Glycyl lysine isopeptide (Lys-Gly) (interchain with G-Cter in ubiquitin)). A Phosphothreonine; by PKC/PRKCD modification is found at threonine 231. Serine 277 is subject to Phosphoserine. The stretch at 303-415 (SLRKDLRQAE…LLAAEGRLKQ (113 aa)) forms a coiled coil. Phosphoserine occurs at positions 424, 425, 431, 451, 461, 483, and 498. A disordered region spans residues 425–451 (SDLEDSSPRNSQELSLPQDLEEDAQLS). The tract at residues 476 to 536 (LTHGMGPSSS…GSDNTDTEGS (61 aa)) is disordered. Residues 487–502 (PPEKERRRLKESFENY) show a composition bias toward basic and acidic residues. Phosphothreonine; by CK2 occurs at positions 531 and 533.

Monomer. Homodimer; homodimerization is mediated by the CARD domain which forms an extensive interaction with the adjacent linker and coiled-coil regions; leads to an autoinhibited state. Homomultimer; polymerizes following activation, forming a nucleating helical template that seeds BCL10-filament formation via a CARD-CARD interaction. Interacts (via CARD domain) with BCL10 (via CARD domain); interaction takes place following CARD9 activation and polymerization, leading to the formation of a filamentous CBM complex assembly. Component of a CBM complex (CARD9-BCL10, MALT1), composed of CARD9, BCL10 and MALT1. Interacts with RASGRF1. Interacts with NOD2 (via NACHT domain); interaction is direct. Interacts with RIPK2. Interacts with VHL; without leading to protein degradation. Phosphorylated at Thr-231 by PRKCD downstream of C-type lectin receptors activation: phosphorylation promotes interaction with BCL10, followed by activation of NF-kappa-B and MAP kinase p38 pathways. Phosphorylated at Thr-531 and Thr-531 by CK2 following interaction with VHL, leading to inhibit the ability to activate NF-kappa-B. Post-translationally, ubiquitinated at Lys-125 via 'Lys-27'-linked ubiquitin by TRIM62 downstream of C-type lectin receptors activation; leading to CARD9 activation, followed by activation of NF-kappa-B and MAP kinase p38 pathways. Deubiquitinated at Lys-125 by USP15, inhibiting CARD9. Specifically expressed in myeloid cells. Not expressed in non-lymphoid organs.

It localises to the cytoplasm. With respect to regulation, maintained in an autoinhibited state via homodimerization in which the CARD domain forms an extensive interaction with the adjacent linker and coiled-coil regions. Activation downstream of C-type lectin receptors, by phosphorylation by PRKCD and/or ubiquitination by TRIM62, triggers disruption of the CARD domain-coiled coil interface, CARD9 homooligomerization and BCL10 recruitment, followed by activation of NF-kappa-B and MAP kinase p38 pathways. Zinc-binding inhibits activation by stabilizing the CARD ground-state conformation and restricting its capacity to form BCL10-nucleating filaments. Functionally, adapter protein that plays a key role in innate immune response against fungi by forming signaling complexes downstream of C-type lectin receptors. CARD9-mediated signals are essential for antifungal immunity against a subset of fungi from the phylum Ascomycota. Transduces signals in myeloid cells downstream of C-type lectin receptors CLEC7A (dectin-1), CLEC6A (dectin-2) and CLEC4E (Mincle), which detect pathogen-associated molecular pattern metabolites (PAMPs), such as fungal carbohydrates, and trigger CARD9 activation. Upon activation, CARD9 homooligomerizes to form a nucleating helical template that recruits BCL10 via CARD-CARD interaction, thereby promoting polymerization of BCL10 and subsequent recruitment of MALT1: this leads to activation of NF-kappa-B and MAP kinase p38 (MAPK11, MAPK12, MAPK13 and/or MAPK14) pathways which stimulate expression of genes encoding pro-inflammatory cytokines and chemokines. CARD9 signaling in antigen-presenting cells links innate sensing of fungi to the activation of adaptive immunity and provides a cytokine milieu that induces the development and subsequent of interleukin 17-producing T helper (Th17) cells. Also involved in activation of myeloid cells via classical ITAM-associated receptors and TLR: required for TLR-mediated activation of MAPK, while it is not required for TLR-induced activation of NF-kappa-B. CARD9 can also be engaged independently of BCL10: forms a complex with RASGRF1 downstream of C-type lectin receptors, which recruits and activates HRAS, leading to ERK activation and the production of cytokines. Acts as an important regulator of the intestinal commensal fungi (mycobiota) component of the gut microbiota. Plays an essential role in antifungal immunity against dissemination of gut fungi: acts by promoting induction of antifungal IgG antibodies response in CX3CR1(+) macrophages to confer protection against disseminated C.albicans or C.auris infection. Also mediates immunity against other pathogens, such as certain bacteria, viruses and parasites; CARD9 signaling is however redundant with other innate immune responses. In response to L.monocytogenes infection, required for the production of inflammatory cytokines activated by intracellular peptidoglycan: acts by connecting NOD2 recognition of peptidoglycan to downstream activation of MAP kinases (MAPK) without activating NF-kappa-B. In Mus musculus (Mouse), this protein is Caspase recruitment domain-containing protein 9.